A 37-amino-acid chain; its full sequence is Large ribosomal subunit protein bL36 (37 aa).

It belongs to the bacterial ribosomal protein bL36 family.

The chain is Large ribosomal subunit protein bL36 from Azoarcus sp. (strain BH72).